The sequence spans 351 residues: Nicotinate-nucleotide--dimethylbenzimidazole phosphoribosyltransferase (351 aa).

Catalysis depends on Glu317, which acts as the Proton acceptor.

The protein belongs to the CobT family.

The enzyme catalyses 5,6-dimethylbenzimidazole + nicotinate beta-D-ribonucleotide = alpha-ribazole 5'-phosphate + nicotinate + H(+). It participates in nucleoside biosynthesis; alpha-ribazole biosynthesis; alpha-ribazole from 5,6-dimethylbenzimidazole: step 1/2. Its function is as follows. Catalyzes the synthesis of alpha-ribazole-5'-phosphate from nicotinate mononucleotide (NAMN) and 5,6-dimethylbenzimidazole (DMB). This Pseudomonas putida (strain W619) protein is Nicotinate-nucleotide--dimethylbenzimidazole phosphoribosyltransferase.